Consider the following 408-residue polypeptide: Arginine biosynthesis bifunctional protein ArgJ (408 aa).

Residues threonine 156, lysine 182, threonine 193, glutamate 279, asparagine 403, and serine 408 each coordinate substrate. Threonine 193 acts as the Nucleophile in catalysis.

It belongs to the ArgJ family. As to quaternary structure, heterotetramer of two alpha and two beta chains.

Its subcellular location is the cytoplasm. It catalyses the reaction N(2)-acetyl-L-ornithine + L-glutamate = N-acetyl-L-glutamate + L-ornithine. The enzyme catalyses L-glutamate + acetyl-CoA = N-acetyl-L-glutamate + CoA + H(+). It functions in the pathway amino-acid biosynthesis; L-arginine biosynthesis; L-ornithine and N-acetyl-L-glutamate from L-glutamate and N(2)-acetyl-L-ornithine (cyclic): step 1/1. It participates in amino-acid biosynthesis; L-arginine biosynthesis; N(2)-acetyl-L-ornithine from L-glutamate: step 1/4. Functionally, catalyzes two activities which are involved in the cyclic version of arginine biosynthesis: the synthesis of N-acetylglutamate from glutamate and acetyl-CoA as the acetyl donor, and of ornithine by transacetylation between N(2)-acetylornithine and glutamate. The sequence is that of Arginine biosynthesis bifunctional protein ArgJ from Bordetella pertussis (strain Tohama I / ATCC BAA-589 / NCTC 13251).